The following is a 1112-amino-acid chain: DNA-directed RNA polymerase subunit beta (1112 aa).

The tract at residues 1087-1112 (VGGRRTPNRPTYENIGGPREMEFSED) is disordered.

This sequence belongs to the RNA polymerase beta chain family. In cyanobacteria the RNAP catalytic core is composed of 2 alpha, 1 beta, 1 beta', 1 gamma and 1 omega subunit. When a sigma factor is associated with the core the holoenzyme is formed, which can initiate transcription.

The catalysed reaction is RNA(n) + a ribonucleoside 5'-triphosphate = RNA(n+1) + diphosphate. Its function is as follows. DNA-dependent RNA polymerase catalyzes the transcription of DNA into RNA using the four ribonucleoside triphosphates as substrates. The protein is DNA-directed RNA polymerase subunit beta of Gloeobacter violaceus (strain ATCC 29082 / PCC 7421).